A 76-amino-acid polypeptide reads, in one-letter code: Acyl carrier protein (76 aa).

The region spanning 1-76 (MSVEEKISKI…DAIAYIKNKQ (76 aa)) is the Carrier domain. Ser-36 is subject to O-(pantetheine 4'-phosphoryl)serine.

It belongs to the acyl carrier protein (ACP) family. In terms of processing, 4'-phosphopantetheine is transferred from CoA to a specific serine of apo-ACP by AcpS. This modification is essential for activity because fatty acids are bound in thioester linkage to the sulfhydryl of the prosthetic group.

The protein localises to the cytoplasm. It functions in the pathway lipid metabolism; fatty acid biosynthesis. Carrier of the growing fatty acid chain in fatty acid biosynthesis. This chain is Acyl carrier protein, found in Nitratidesulfovibrio vulgaris (strain DSM 19637 / Miyazaki F) (Desulfovibrio vulgaris).